The sequence spans 152 residues: Transcriptional repressor NrdR (152 aa).

A zinc finger spans residues 3–34 (CPFCSTEETKVIDSRLVSEGYQVRRRRECTNC). Residues 49–139 (PKIVKTDGYR…VYLSFENINE (91 aa)) form the ATP-cone domain.

Belongs to the NrdR family. Requires Zn(2+) as cofactor.

Its function is as follows. Negatively regulates transcription of bacterial ribonucleotide reductase nrd genes and operons by binding to NrdR-boxes. This chain is Transcriptional repressor NrdR, found in Actinobacillus succinogenes (strain ATCC 55618 / DSM 22257 / CCUG 43843 / 130Z).